The following is a 200-amino-acid chain: Nucleoside triphosphate pyrophosphatase (200 aa).

D75 functions as the Proton acceptor in the catalytic mechanism.

It belongs to the Maf family. A divalent metal cation serves as cofactor.

It is found in the cytoplasm. The enzyme catalyses a ribonucleoside 5'-triphosphate + H2O = a ribonucleoside 5'-phosphate + diphosphate + H(+). It catalyses the reaction a 2'-deoxyribonucleoside 5'-triphosphate + H2O = a 2'-deoxyribonucleoside 5'-phosphate + diphosphate + H(+). In terms of biological role, nucleoside triphosphate pyrophosphatase. May have a dual role in cell division arrest and in preventing the incorporation of modified nucleotides into cellular nucleic acids. The chain is Nucleoside triphosphate pyrophosphatase from Synechococcus sp. (strain CC9311).